The following is a 515-amino-acid chain: Histidine ammonia-lyase (515 aa).

Positions 142 to 144 (ASG) form a cross-link, 5-imidazolinone (Ala-Gly). The residue at position 143 (S143) is a 2,3-didehydroalanine (Ser).

The protein belongs to the PAL/histidase family. Post-translationally, contains an active site 4-methylidene-imidazol-5-one (MIO), which is formed autocatalytically by cyclization and dehydration of residues Ala-Ser-Gly.

The protein localises to the cytoplasm. The enzyme catalyses L-histidine = trans-urocanate + NH4(+). The protein operates within amino-acid degradation; L-histidine degradation into L-glutamate; N-formimidoyl-L-glutamate from L-histidine: step 1/3. The protein is Histidine ammonia-lyase of Bradyrhizobium sp. (strain ORS 278).